An 812-amino-acid polypeptide reads, in one-letter code: MSRFFSRGYHYDTASSSEDEELLTSSEEELMSSSEEEVVSDDSFFNDSESESAESDDDSDGKPYGPDWFKKPQFRKGGAPGGSGASRFLKGNADSSDESDDEGKKVVKSARDKLLDELNNTYNKIDAAEMTQDWTTILSEFESATKLLVKAQQQNMGTPNVFVRVVAQVEDLVAETSQAEIKNKIVAKAYNTVKQRVRKIARENEELLAKFRQHPEAFEKDSTVEFGQARDFDASDLTLMGRKVADRSAIVSSPSDFFSALRIVIDSRGKKGTDIQAQIKTMEELVSISKSPYESIIAYLNLIPIRFDACANLAYQPLEQWKASHNNVTSLLELLEANIESYHVTELAPRNEFIEEEPQPNENGVRMILGSVFTFVERLDDEFNKSLLNTDPHSSDYLDRLRDEQSVYNLILRSQLYLEKVLPEDTASKHLCRSFVRRLDHIYYKTSKLVDIVERAAWASVPANSSSKYITYSDDPDYNFKLVNTLCTVVSSEQEMLKRRATLYQIYYYALNNQFSKAKEMLVQSNVRNSINSQDPTIQILFNRVVVQLGLAAFKLCLVEDCHQILNEVSTASHLRDIMGQQSLQRVSNNISSNGTVTPTEMLCLPFHQHINLDLIDAVFMTCSLLIEIPHMAAFYSGIKVKRIPYSQKSIRRALEHYEKSSFQGPPETLRDHVIHAAKAMQRGNWAQCINYLRSISTWTLLGDKMEKVLEQLAERIQIESLKTYIFTYKRFYTKLSVQKLSELFSLPTEQVISVIQTLENTINIKGSLNEAKEMLIFDKGDEITKLEEVAIKLTKETKYQSERLNNVSQRQ.

Residues 1 to 105 are disordered; the sequence is MSRFFSRGYH…SDESDDEGKK (105 aa). 2 stretches are compositionally biased toward acidic residues: residues 17 to 40 and 48 to 59; these read SEDE…EVVS and SESESAESDDDS. Residues 607 to 783 form the PCI domain; the sequence is FHQHINLDLI…EMLIFDKGDE (177 aa).

This sequence belongs to the eIF-3 subunit C family. As to quaternary structure, component of the eukaryotic translation initiation factor 3 (eIF-3) complex.

The protein resides in the cytoplasm. In terms of biological role, component of the eukaryotic translation initiation factor 3 (eIF-3) complex, which is involved in protein synthesis of a specialized repertoire of mRNAs and, together with other initiation factors, stimulates binding of mRNA and methionyl-tRNAi to the 40S ribosome. The eIF-3 complex specifically targets and initiates translation of a subset of mRNAs involved in cell proliferation. The protein is Eukaryotic translation initiation factor 3 subunit C of Eremothecium gossypii (strain ATCC 10895 / CBS 109.51 / FGSC 9923 / NRRL Y-1056) (Yeast).